A 153-amino-acid polypeptide reads, in one-letter code: Large ribosomal subunit protein uL30 (153 aa).

This sequence belongs to the universal ribosomal protein uL30 family. As to quaternary structure, part of the 50S ribosomal subunit.

This Methanoculleus marisnigri (strain ATCC 35101 / DSM 1498 / JR1) protein is Large ribosomal subunit protein uL30.